A 488-amino-acid chain; its full sequence is Cobyric acid synthase (488 aa).

The GATase cobBQ-type domain occupies 254–442 (KFKIVVPVLP…VHGLFGMDTQ (189 aa)). Cysteine 336 serves as the catalytic Nucleophile. Residue histidine 434 is part of the active site.

The protein belongs to the CobB/CobQ family. CobQ subfamily.

Its pathway is cofactor biosynthesis; adenosylcobalamin biosynthesis. Its function is as follows. Catalyzes amidations at positions B, D, E, and G on adenosylcobyrinic A,C-diamide. NH(2) groups are provided by glutamine, and one molecule of ATP is hydrogenolyzed for each amidation. The protein is Cobyric acid synthase of Beijerinckia indica subsp. indica (strain ATCC 9039 / DSM 1715 / NCIMB 8712).